A 271-amino-acid polypeptide reads, in one-letter code: Putative pyruvate, phosphate dikinase regulatory protein 2 (271 aa).

151-158 contributes to the ADP binding site; sequence GVSRTSKT.

It belongs to the pyruvate, phosphate/water dikinase regulatory protein family. PDRP subfamily.

It carries out the reaction N(tele)-phospho-L-histidyl/L-threonyl-[pyruvate, phosphate dikinase] + ADP = N(tele)-phospho-L-histidyl/O-phospho-L-threonyl-[pyruvate, phosphate dikinase] + AMP + H(+). It catalyses the reaction N(tele)-phospho-L-histidyl/O-phospho-L-threonyl-[pyruvate, phosphate dikinase] + phosphate + H(+) = N(tele)-phospho-L-histidyl/L-threonyl-[pyruvate, phosphate dikinase] + diphosphate. In terms of biological role, bifunctional serine/threonine kinase and phosphorylase involved in the regulation of the pyruvate, phosphate dikinase (PPDK) by catalyzing its phosphorylation/dephosphorylation. This is Putative pyruvate, phosphate dikinase regulatory protein 2 from Staphylococcus haemolyticus (strain JCSC1435).